The following is a 101-amino-acid chain: NADH-quinone oxidoreductase subunit K (101 aa).

3 consecutive transmembrane segments (helical) span residues Leu-4–Ile-24, Ile-30–Phe-50, and Ile-61–Leu-81.

This sequence belongs to the complex I subunit 4L family. As to quaternary structure, NDH-1 is composed of 14 different subunits. Subunits NuoA, H, J, K, L, M, N constitute the membrane sector of the complex.

The protein resides in the cell inner membrane. The catalysed reaction is a quinone + NADH + 5 H(+)(in) = a quinol + NAD(+) + 4 H(+)(out). Its function is as follows. NDH-1 shuttles electrons from NADH, via FMN and iron-sulfur (Fe-S) centers, to quinones in the respiratory chain. The immediate electron acceptor for the enzyme in this species is believed to be ubiquinone. Couples the redox reaction to proton translocation (for every two electrons transferred, four hydrogen ions are translocated across the cytoplasmic membrane), and thus conserves the redox energy in a proton gradient. The sequence is that of NADH-quinone oxidoreductase subunit K from Coxiella burnetii (strain CbuG_Q212) (Coxiella burnetii (strain Q212)).